Reading from the N-terminus, the 200-residue chain is Cysteine dioxygenase type 1 (200 aa).

The Fe cation site is built by His-86, His-88, and His-140. The segment at residues 93–157 (CFLKMLQGNL…TEPAVSLHLY (65 aa)) is a cross-link (3'-(S-cysteinyl)-tyrosine (Cys-Tyr)).

Belongs to the cysteine dioxygenase family. In terms of assembly, monomer. The cofactor is Fe cation. Requires Ni(2+) as cofactor. It depends on Zn(2+) as a cofactor. The thioether cross-link between Cys-93 and Tyr-157 plays a structural role through stabilizing the Fe(2+) ion, and prevents the production of highly damaging free hydroxyl radicals by holding the oxygen radical via hydroxyl hydrogen.

The enzyme catalyses L-cysteine + O2 = 3-sulfino-L-alanine + H(+). It participates in organosulfur biosynthesis; taurine biosynthesis; hypotaurine from L-cysteine: step 1/2. Catalyzes the oxidation of cysteine to cysteine sulfinic acid with addition of molecular dioxygen. This is Cysteine dioxygenase type 1 (CDO1) from Bos taurus (Bovine).